The chain runs to 389 residues: Succinate--CoA ligase [ADP-forming] subunit beta (389 aa).

ATP is bound by residues Lys46, 53–55 (GRG), Glu99, Cys102, and Glu107. The Mg(2+) site is built by Asn199 and Asp213. Residues Asn264 and 321–323 (GIV) each bind substrate.

The protein belongs to the succinate/malate CoA ligase beta subunit family. As to quaternary structure, heterotetramer of two alpha and two beta subunits. Requires Mg(2+) as cofactor.

It carries out the reaction succinate + ATP + CoA = succinyl-CoA + ADP + phosphate. The enzyme catalyses GTP + succinate + CoA = succinyl-CoA + GDP + phosphate. The protein operates within carbohydrate metabolism; tricarboxylic acid cycle; succinate from succinyl-CoA (ligase route): step 1/1. Functionally, succinyl-CoA synthetase functions in the citric acid cycle (TCA), coupling the hydrolysis of succinyl-CoA to the synthesis of either ATP or GTP and thus represents the only step of substrate-level phosphorylation in the TCA. The beta subunit provides nucleotide specificity of the enzyme and binds the substrate succinate, while the binding sites for coenzyme A and phosphate are found in the alpha subunit. The sequence is that of Succinate--CoA ligase [ADP-forming] subunit beta from Haemophilus influenzae (strain 86-028NP).